The chain runs to 497 residues: Lysine--tRNA ligase (497 aa).

Positions 409 and 416 each coordinate Mg(2+).

The protein belongs to the class-II aminoacyl-tRNA synthetase family. As to quaternary structure, homodimer. It depends on Mg(2+) as a cofactor.

Its subcellular location is the cytoplasm. It carries out the reaction tRNA(Lys) + L-lysine + ATP = L-lysyl-tRNA(Lys) + AMP + diphosphate. This Streptococcus pyogenes serotype M49 (strain NZ131) protein is Lysine--tRNA ligase.